Here is a 188-residue protein sequence, read N- to C-terminus: GTP cyclohydrolase 1 (188 aa).

Residues C73, H76, and C144 each coordinate Zn(2+).

This sequence belongs to the GTP cyclohydrolase I family. In terms of assembly, homomer.

It carries out the reaction GTP + H2O = 7,8-dihydroneopterin 3'-triphosphate + formate + H(+). The protein operates within cofactor biosynthesis; 7,8-dihydroneopterin triphosphate biosynthesis; 7,8-dihydroneopterin triphosphate from GTP: step 1/1. This chain is GTP cyclohydrolase 1, found in Caldivirga maquilingensis (strain ATCC 700844 / DSM 13496 / JCM 10307 / IC-167).